Consider the following 426-residue polypeptide: Glutamate-1-semialdehyde 2,1-aminomutase (426 aa).

Position 265 is an N6-(pyridoxal phosphate)lysine (K265).

It belongs to the class-III pyridoxal-phosphate-dependent aminotransferase family. HemL subfamily. Homodimer. Pyridoxal 5'-phosphate is required as a cofactor.

The protein resides in the cytoplasm. It carries out the reaction (S)-4-amino-5-oxopentanoate = 5-aminolevulinate. The protein operates within porphyrin-containing compound metabolism; protoporphyrin-IX biosynthesis; 5-aminolevulinate from L-glutamyl-tRNA(Glu): step 2/2. This chain is Glutamate-1-semialdehyde 2,1-aminomutase, found in Akkermansia muciniphila (strain ATCC BAA-835 / DSM 22959 / JCM 33894 / BCRC 81048 / CCUG 64013 / CIP 107961 / Muc).